We begin with the raw amino-acid sequence, 35 residues long: Photosystem II reaction center protein T (35 aa).

Residues 3-23 form a helical membrane-spanning segment; it reads ALVYTFLLISTLGIIFFAIFF.

Belongs to the PsbT family. As to quaternary structure, PSII is composed of 1 copy each of membrane proteins PsbA, PsbB, PsbC, PsbD, PsbE, PsbF, PsbH, PsbI, PsbJ, PsbK, PsbL, PsbM, PsbT, PsbY, PsbZ, Psb30/Ycf12, at least 3 peripheral proteins of the oxygen-evolving complex and a large number of cofactors. It forms dimeric complexes.

It is found in the plastid. The protein localises to the chloroplast thylakoid membrane. Functionally, found at the monomer-monomer interface of the photosystem II (PS II) dimer, plays a role in assembly and dimerization of PSII. PSII is a light-driven water plastoquinone oxidoreductase, using light energy to abstract electrons from H(2)O, generating a proton gradient subsequently used for ATP formation. This Welwitschia mirabilis (Tree tumbo) protein is Photosystem II reaction center protein T.